A 217-amino-acid polypeptide reads, in one-letter code: Uracil-DNA glycosylase (217 aa).

Catalysis depends on Asp-62, which acts as the Proton acceptor.

The protein belongs to the uracil-DNA glycosylase (UDG) superfamily. UNG family.

The protein localises to the cytoplasm. The enzyme catalyses Hydrolyzes single-stranded DNA or mismatched double-stranded DNA and polynucleotides, releasing free uracil.. Excises uracil residues from the DNA which can arise as a result of misincorporation of dUMP residues by DNA polymerase or due to deamination of cytosine. The chain is Uracil-DNA glycosylase from Streptococcus equi subsp. zooepidemicus (strain H70).